Reading from the N-terminus, the 325-residue chain is Thiamine-monophosphate kinase (325 aa).

4 residues coordinate Mg(2+): D30, S45, T46, and D47. Substrate is bound at residue H54. Mg(2+) contacts are provided by D75 and D122. ATP-binding positions include 121–122 and R146; that span reads GD. Residue D212 participates in Mg(2+) binding. S214 provides a ligand contact to ATP. D215 contacts Mg(2+). Residues E263 and Y319 each contribute to the substrate site.

The protein belongs to the thiamine-monophosphate kinase family.

The enzyme catalyses thiamine phosphate + ATP = thiamine diphosphate + ADP. The protein operates within cofactor biosynthesis; thiamine diphosphate biosynthesis; thiamine diphosphate from thiamine phosphate: step 1/1. In terms of biological role, catalyzes the ATP-dependent phosphorylation of thiamine-monophosphate (TMP) to form thiamine-pyrophosphate (TPP), the active form of vitamin B1. This Escherichia coli O157:H7 protein is Thiamine-monophosphate kinase.